Reading from the N-terminus, the 620-residue chain is Sodium-dependent dopamine transporter (620 aa).

At 1–56 (MSKSKCSVGLMSSVVAPAKEPNAMGPKEVELILVKEQNGVQLTSSTLTNPRQSPVE) the chain is on the cytoplasmic side. A discontinuously helical transmembrane segment spans residues 57–95 (AQDRETWGKKIDFLLSVIGFAVDLANVWRFPYLCYKNGG). Na(+) contacts are provided by glycine 75, alanine 77, valine 78, aspartate 79, and asparagine 82. Position 79 (aspartate 79) interacts with dopamine. The next 2 membrane-spanning stretches (helical) occupy residues 96–127 (GAFL…NREG) and 128–171 (AAGV…FSSF). Dopamine-binding residues include serine 149 and glycine 153. The Extracellular segment spans residues 172-236 (TTELPWIHCN…SHGIDDLGPP (65 aa)). Residues cysteine 180 and cysteine 189 are joined by a disulfide bond. 3 N-linked (GlcNAc...) asparagine glycosylation sites follow: asparagine 181, asparagine 188, and asparagine 205. The next 2 membrane-spanning stretches (helical) occupy residues 237 to 256 (RWQL…FSLW) and 257 to 287 (KGVK…GVTL). At 288-306 (PGAIDGIRAYLSVDFYRLC) the chain is on the extracellular side. Residues 307–335 (EASVWIDAATQVCFSLGVGFGVLIAFSSY) form a discontinuously helical membrane-spanning segment. Glutamine 317 is a binding site for chloride. Phenylalanine 320 lines the dopamine pocket. Positions 321 and 353 each coordinate Na(+). Position 321 (serine 321) interacts with chloride. The helical transmembrane segment at 336 to 376 (NKFTNNCYRDAIVTTSINSLTSFSSGFVVFSFLGYMAQKHS) threads the bilayer. Chloride is bound at residue serine 357. Over 377 to 400 (VPIGDVAKDGPGLIFIIYPEAIAT) the chain is Extracellular. 3 helical membrane-spanning segments follow: residues 401–442 (LPLS…QLLH), 443–466 (RHRE…CVTN), and 467–499 (GGIY…AWFY). Residues leucine 418, aspartate 421, and serine 422 each coordinate Na(+). The dopamine site is built by serine 422 and alanine 423. At 500 to 516 (GVGQFSDDIQQMTGQRP) the chain is on the cytoplasmic side. A helical membrane pass occupies residues 517 to 542 (SLYWRLCWKLVSPCFLLFVVVVSIVT). At 543 to 553 (FRPPHYGAYIF) the chain is on the extracellular side. A helical membrane pass occupies residues 554–583 (PDWANALGWVIATSSMAMVPIYAAYKFCSL). The interaction with TGFB1I1 stretch occupies residues 561 to 590 (GWVIATSSMAMVPIYAAYKFCSLPGSFREK). Residues 584–620 (PGSFREKLAYAIAPEKDRELVDRGEVRQFTLRHWLKV) are Cytoplasmic-facing.

This sequence belongs to the sodium:neurotransmitter symporter (SNF) (TC 2.A.22) family. SLC6A3 subfamily. As to quaternary structure, monomer. Homooligomer; disulfide-linked. Interacts with PRKCABP and TGFB1I1. Interacts (via N-terminus) with SYNGR3 (via N-terminus). Interacts with SLC18A2. Interacts with TOR1A (ATP-bound); TOR1A regulates SLC6A3 subcellular location. Interacts with alpha-synuclein/SNCA. Interacts with SEPTIN4.

It localises to the cell membrane. The protein localises to the cell projection. Its subcellular location is the neuron projection. The protein resides in the axon. The catalysed reaction is dopamine(out) + chloride(out) + Na(+)(out) = dopamine(in) + chloride(in) + Na(+)(in). The enzyme catalyses (R)-noradrenaline(out) + chloride(out) + Na(+)(out) = (R)-noradrenaline(in) + chloride(in) + Na(+)(in). It carries out the reaction dopamine(out) + chloride(out) + 2 Na(+)(out) = dopamine(in) + chloride(in) + 2 Na(+)(in). Inhibited by zinc ions. Its function is as follows. Mediates sodium- and chloride-dependent transport of dopamine. Also mediates sodium- and chloride-dependent transport of norepinephrine (also known as noradrenaline). Regulator of light-dependent retinal hyaloid vessel regression, downstream of OPN5 signaling. The chain is Sodium-dependent dopamine transporter (SLC6A3) from Macaca fascicularis (Crab-eating macaque).